We begin with the raw amino-acid sequence, 207 residues long: Phosphoribosylglycinamide formyltransferase (207 aa).

13–15 (GSN) contacts N(1)-(5-phospho-beta-D-ribosyl)glycinamide. (6R)-10-formyltetrahydrofolate-binding positions include 100–103 (MHIL) and asparagine 120. The active-site Proton donor is the histidine 122. Residue aspartate 162 participates in (6R)-10-formyltetrahydrofolate binding. Residue glutamate 191 participates in N(1)-(5-phospho-beta-D-ribosyl)glycinamide binding.

It belongs to the GART family.

The catalysed reaction is N(1)-(5-phospho-beta-D-ribosyl)glycinamide + (6R)-10-formyltetrahydrofolate = N(2)-formyl-N(1)-(5-phospho-beta-D-ribosyl)glycinamide + (6S)-5,6,7,8-tetrahydrofolate + H(+). It participates in purine metabolism; IMP biosynthesis via de novo pathway; N(2)-formyl-N(1)-(5-phospho-D-ribosyl)glycinamide from N(1)-(5-phospho-D-ribosyl)glycinamide (10-formyl THF route): step 1/1. The protein is Phosphoribosylglycinamide formyltransferase (ade5) of Schizosaccharomyces pombe (strain 972 / ATCC 24843) (Fission yeast).